The sequence spans 434 residues: Evolutionarily conserved signaling intermediate in Toll pathway, mitochondrial (434 aa).

The N-terminal 48 residues, 1–48 (MSWVQVNLLARGLSRGWGSICRTVLSGTPFAQPSLQARGLHCSAVTHK), are a transit peptide targeting the mitochondrion. Lys371 is covalently cross-linked (Glycyl lysine isopeptide (Lys-Gly) (interchain with G-Cter in ubiquitin)). Positions 403 to 434 (TRLEGQSPPHSPPKGPEEDDEAIQAQQRQGQS) are disordered.

This sequence belongs to the ECSIT family. As to quaternary structure, interacts with MAP3K1, SMAD4 and TRAF6. Interacts with SMAD1 only after BMP4-treatment. Part of the mitochondrial complex I assembly/MCIA complex that comprises at least the core subunits TMEM126B, NDUFAF1, ECSIT and ACAD9 and complement subunits such as COA1 and TMEM186. Interacts with NDUFAF1. Interacts with ACAD9. Interacts with TRIM59. Interacts with TMEM70 and TMEM242. Interacts (when ubiquitinated) with NF-kappa-B subunits RELA and NFKB1. Interacts with RIGI, IFIT1 and MAVS; these interactions promote RLR-mediated type I IFN induction. Interacts with SQSTM1; this interaction inhibits TLR4 signaling via functional regulation of the TRAF6-ECSIT complex. Interacts with cereblon/CRBN; this interaction inhibits the ubiquitination of ECSIT. In terms of processing, ubiquitinated on Lys-371; leading to translocation in the nucleus together with RELA and NFKB1 and expression of NF-kappa-B-dependent genes.

The protein localises to the cytoplasm. It is found in the nucleus. It localises to the mitochondrion. Its function is as follows. Adapter protein that plays a role in different signaling pathways including TLRs and IL-1 pathways or innate antiviral induction signaling. Plays a role in the activation of NF-kappa-B by forming a signal complex with TRAF6 and TAK1/MAP3K7 to activate TAK1/MAP3K7 leading to activation of IKKs. Once ubiquitinated, interacts with the dissociated RELA and NFKB1 proteins and translocates to the nucleus where it induces NF-kappa-B-dependent gene expression. Plays a role in innate antiviral immune response by bridging the pattern recognition receptors RIGI and MDA5/IFIT1 to the MAVS complex at the mitochondrion. Promotes proteolytic activation of MAP3K1. Involved in the BMP signaling pathway. Required for normal embryonic development. As part of the MCIA complex, involved in the assembly of the mitochondrial complex I. This Rattus norvegicus (Rat) protein is Evolutionarily conserved signaling intermediate in Toll pathway, mitochondrial.